The primary structure comprises 754 residues: Zinc finger protein with KRAB and SCAN domains 7 (754 aa).

A Glycyl lysine isopeptide (Lys-Gly) (interchain with G-Cter in SUMO2) cross-link involves residue Lys-28. The region spanning 54 to 136 (RLHFRQLCYH…AVVEDFQRHL (83 aa)) is the SCAN box domain. Positions 157–215 (TALGTTKESPPTSPLSGGSAPGAHLEPPYDPGTHHLPSGDFAQCTSPVPTLPQVGNSGD) are disordered. Polar residues-rich tracts occupy residues 158-172 (ALGT…SPLS) and 199-215 (QCTS…NSGD). The region spanning 231-306 (VAYEDLSVDY…TSGGLFGVVP (76 aa)) is the KRAB domain. 10 C2H2-type zinc fingers span residues 383–405 (YRCD…QRIH), 411–433 (YECN…LRTH), 439–461 (YECS…QRLH), 467–489 (YKCN…QRTH), 495–517 (YECN…QVLH), 523–545 (YKCN…QRIH), 551–573 (YECS…QSLH), 579–601 (YKCS…ERIH), 607–629 (FECS…QRLH), and 635–657 (YKCN…QRIH). Residues 663–685 (YECNECGKVFSYSSSLMVHQRTH) form a C2H2-type 11; degenerate zinc finger. 2 C2H2-type zinc fingers span residues 691–713 (YKCN…QRVH) and 719–741 (YECS…QRTH). The interval 735–754 (NHHQRTHTGEKSSGLAWSVS) is disordered.

This sequence belongs to the krueppel C2H2-type zinc-finger protein family.

It localises to the nucleus. May be involved in transcriptional regulation. The polypeptide is Zinc finger protein with KRAB and SCAN domains 7 (ZKSCAN7) (Homo sapiens (Human)).